The following is a 320-amino-acid chain: Probable 5-dehydro-4-deoxyglucarate dehydratase (320 aa).

Belongs to the DapA family.

It catalyses the reaction 5-dehydro-4-deoxy-D-glucarate + H(+) = 2,5-dioxopentanoate + CO2 + H2O. Its pathway is carbohydrate acid metabolism; D-glucarate degradation; 2,5-dioxopentanoate from D-glucarate: step 2/2. The sequence is that of Probable 5-dehydro-4-deoxyglucarate dehydratase from Streptomyces griseus subsp. griseus (strain JCM 4626 / CBS 651.72 / NBRC 13350 / KCC S-0626 / ISP 5235).